The chain runs to 639 residues: Chaperone protein DnaK (639 aa).

Position 197 is a phosphothreonine; by autocatalysis (Thr197). Positions 600 to 639 are disordered; it reads SGAQGGAQAGPDMNAGQSNAGQNNGKQDDNVQDADFEEVK. Residues 613 to 624 are compositionally biased toward low complexity; it reads NAGQSNAGQNNG. The segment covering 629–639 has biased composition (acidic residues); the sequence is NVQDADFEEVK.

It belongs to the heat shock protein 70 family.

In terms of biological role, acts as a chaperone. The chain is Chaperone protein DnaK from Bacteroides fragilis (strain ATCC 25285 / DSM 2151 / CCUG 4856 / JCM 11019 / LMG 10263 / NCTC 9343 / Onslow / VPI 2553 / EN-2).